A 235-amino-acid polypeptide reads, in one-letter code: MAGVSSCLKYSMFFFNFLFWVCGTLILGLAIWVRVSKDGKEIITSGDSSTNPFIAVNILIAVGSIIMVLGFLGCCGAVKESRCMLLLFFIGLLLILILQVAAGILGAAFKPEYNRILNETLYENAKLLSDNTDEAKDFQKAMIVFQSEFKCCGLENGAADWGNNFVEAKESCQCTGTDCATYQGSSVYPKTCLSLIKDLFEKNIIIVIGIAFGLAVIEILGLVFSMVLYCQIGSK.

The Cytoplasmic segment spans residues 1–12 (MAGVSSCLKYSM). A helical membrane pass occupies residues 13 to 33 (FFFNFLFWVCGTLILGLAIWV). Residues 34–52 (RVSKDGKEIITSGDSSTNP) are Extracellular-facing. Residues 53-73 (FIAVNILIAVGSIIMVLGFLG) traverse the membrane as a helical segment. Residues 74 to 84 (CCGAVKESRCM) lie on the Cytoplasmic side of the membrane. The helical transmembrane segment at 85-105 (LLLFFIGLLLILILQVAAGIL) threads the bilayer. At 106-203 (GAAFKPEYNR…SLIKDLFEKN (98 aa)) the chain is on the extracellular side. The N-linked (GlcNAc...) asparagine glycan is linked to Asn-118. Residues 204–224 (IIIVIGIAFGLAVIEILGLVF) form a helical membrane-spanning segment. Residues 225 to 235 (SMVLYCQIGSK) are Cytoplasmic-facing.

It belongs to the tetraspanin (TM4SF) family. In terms of assembly, forms homooligomers. Interacts with MEP1B. Interacts with integrin alpha3/ITGA3. Interacts with RICTOR and MTOR. Interacts with ADAM17. Interacts with ECE1.

The protein localises to the cell membrane. Functionally, structural component of specialized membrane microdomains known as tetraspanin-enriched microdomains (TERMs), which act as platforms for receptor clustering and signaling. Participates thereby in diverse biological functions such as cell signal transduction, migration and protein trafficking. Promotes ADAM17-mediated TNF-alpha processing through recruitment of ADAM17 to tetraspanin-enriched micro-domains (TEMs). Forms a complex with RICTOR and integrin alpha3/ITGA3 to mediate mTORC2 activation and AKT1 phosphorylation leading to cell migration. Reduces apoptosis and autophagy induced by high glucose levels through forming a complex with mTOR and RICTOR. Contributes to the maintenance of intestinal epithelial barrier and plays a role in the regulation of intestine inflammation by switching interferon gamma receptor 1/IFNGR1 from clathrin-dependent to lipid raft-dependent endocytosis route to limit STAT1 activation magnitude and duration. Acts as a modulator of the endothelin axis by associating with endothelin converting enzyme ECE1 and regulating its activity of conversion of the endothelin-1 precursor to endothelin. The sequence is that of Tetraspanin-8 (Tspan8) from Mus musculus (Mouse).